Reading from the N-terminus, the 430-residue chain is Histidinol dehydrogenase (430 aa).

Positions 129, 190, and 213 each coordinate NAD(+). Positions 236, 258, and 261 each coordinate substrate. Zn(2+)-binding residues include Gln-258 and His-261. Catalysis depends on proton acceptor residues Glu-326 and His-327. Substrate contacts are provided by His-327, Asp-360, Glu-414, and His-419. Residue Asp-360 participates in Zn(2+) binding. His-419 is a Zn(2+) binding site.

It belongs to the histidinol dehydrogenase family. It depends on Zn(2+) as a cofactor.

It catalyses the reaction L-histidinol + 2 NAD(+) + H2O = L-histidine + 2 NADH + 3 H(+). The protein operates within amino-acid biosynthesis; L-histidine biosynthesis; L-histidine from 5-phospho-alpha-D-ribose 1-diphosphate: step 9/9. Its function is as follows. Catalyzes the sequential NAD-dependent oxidations of L-histidinol to L-histidinaldehyde and then to L-histidine. This chain is Histidinol dehydrogenase, found in Gluconobacter oxydans (strain 621H) (Gluconobacter suboxydans).